The primary structure comprises 207 residues: Large ribosomal subunit protein bL25 (207 aa).

It belongs to the bacterial ribosomal protein bL25 family. CTC subfamily. Part of the 50S ribosomal subunit; part of the 5S rRNA/L5/L18/L25 subcomplex. Contacts the 5S rRNA. Binds to the 5S rRNA independently of L5 and L18.

In terms of biological role, this is one of the proteins that binds to the 5S RNA in the ribosome where it forms part of the central protuberance. The protein is Large ribosomal subunit protein bL25 of Orientia tsutsugamushi (strain Ikeda) (Rickettsia tsutsugamushi).